A 340-amino-acid chain; its full sequence is Phosphate acyltransferase (340 aa).

This sequence belongs to the PlsX family. In terms of assembly, homodimer. Probably interacts with PlsY.

The protein resides in the cytoplasm. The enzyme catalyses a fatty acyl-[ACP] + phosphate = an acyl phosphate + holo-[ACP]. The protein operates within lipid metabolism; phospholipid metabolism. Functionally, catalyzes the reversible formation of acyl-phosphate (acyl-PO(4)) from acyl-[acyl-carrier-protein] (acyl-ACP). This enzyme utilizes acyl-ACP as fatty acyl donor, but not acyl-CoA. This is Phosphate acyltransferase from Clostridioides difficile (strain 630) (Peptoclostridium difficile).